Consider the following 333-residue polypeptide: Biotin synthase (333 aa).

The region spanning 51-281 (HFGNQVSLCG…DVHITICGGR (231 aa)) is the Radical SAM core domain. Residues cysteine 69, cysteine 73, and cysteine 76 each coordinate [4Fe-4S] cluster. Cysteine 206 lines the [2Fe-2S] cluster pocket.

Belongs to the radical SAM superfamily. Biotin synthase family. As to quaternary structure, homodimer. [4Fe-4S] cluster is required as a cofactor. Requires [2Fe-2S] cluster as cofactor.

The catalysed reaction is (4R,5S)-dethiobiotin + (sulfur carrier)-SH + 2 reduced [2Fe-2S]-[ferredoxin] + 2 S-adenosyl-L-methionine = (sulfur carrier)-H + biotin + 2 5'-deoxyadenosine + 2 L-methionine + 2 oxidized [2Fe-2S]-[ferredoxin]. It participates in cofactor biosynthesis; biotin biosynthesis; biotin from 7,8-diaminononanoate: step 2/2. Its function is as follows. Catalyzes the conversion of dethiobiotin (DTB) to biotin by the insertion of a sulfur atom into dethiobiotin via a radical-based mechanism. The protein is Biotin synthase of Trichlorobacter lovleyi (strain ATCC BAA-1151 / DSM 17278 / SZ) (Geobacter lovleyi).